The following is a 1033-amino-acid chain: MAVAPPLPPAPARQLRRWKGSSPRPPPWLSSPFRRTRYLSRPAFAAGGRQDYSPSSGMGVSKTGAFRLGLYGNLNVQSSVQEWVDETKRLFFLRTTNSVRNNITNGTTPLRVGNLRHDPSEDIRSSNYPSLYNQRERGPSNSIVNRHVDTDLAKHRVMYQSAHAVPAPFSVVNNDIKPLNMLDGSKEEIPWHDSVTMESSLPKVSKSEKTLVVDKAIPDKKEHKRITRKVTPNFPDKASLSTESKNARKLLATIYDKVLVVDNVESARSVVKLLTTKYKGFIHACDTEVANIDVKEETPVGHGEVICFSICSGNSDGEADFGNGKTCIWVDVLDGGRDVLMEFAPFFEDPFIKKVWHNYSFDIHVIENCGIKVAGFHADTMHLARLWDSSRRTDGGYSLEGLTNDYRVMDAVLKDIPKTGKVSMKTIFGRKKVRKDGSEGKTISIEPVEKLQREDRELWICYSSLDSMSTLKLYESLKNKLEAKEWIFDDCPRGTMYDFYEEYWRPFGALLVKMETEGVLVDRAYLSEIEKAAVTERELAADKFRKWASKHCPDAKYMNVNSDNQIRQLFFGGIENRNKRGETWPQSKTFKVPNDEGIATEGKKTPKSRTIKLFTIVEDLKIDMFTPTGWPSVSGDVLRSLAGKIPTDHIYKIDDGQEFDEDGSSLELPEQDIEDTSPYGTAYEAFGGGKKGREACHAIAALCEVFSIDKLISGFIVPLQGDRISCKEGRIHCSLNINTETGRLSARTPNLQNQPALEKDRYKIRHAFVAAPGNTLIVADYGQLELRILAHLTNCKSMLEAFKAGGDFHSRTAMNMYQHVRDAVEEKKVLLEWHPQPGQDKPPVPLLKDAFGAERRKAKMLNFSIAYGKTAVGLSWDWKVSVREARDTLKLWYRDRKEVSAWQKKQKAFALEKCEVYTLLGRSRQFPNMTHAGPGQKGHVERAAINAPVQGSAADVAMCAMLEIERNARLKELGWRLLLQVHDEVILEGPTESAEEAKTIVVECMSKPFYGTNILKVDLAVDAKYAKSWYAAK.

The segment covering 1–11 has biased composition (pro residues); it reads MAVAPPLPPAP. Disordered regions lie at residues 1–32 and 104–142; these read MAVAPPLPPAPARQLRRWKGSSPRPPPWLSSP and TNGTTPLRVGNLRHDPSEDIRSSNYPSLYNQRERGPSNS. The transit peptide at 1 to 55 directs the protein to the chloroplast; the sequence is MAVAPPLPPAPARQLRRWKGSSPRPPPWLSSPFRRTRYLSRPAFAAGGRQDYSPS. Over residues 115–124 the composition is skewed to basic and acidic residues; it reads LRHDPSEDIR. Positions 125–142 are enriched in polar residues; sequence SSNYPSLYNQRERGPSNS. The 162-residue stretch at 321–482 folds into the 3'-5' exonuclease domain; sequence FGNGKTCIWV…LYESLKNKLE (162 aa). A polymerase region spans residues 696-1030; it reads CHAIAALCEV…VDAKYAKSWY (335 aa).

It belongs to the DNA polymerase type-A family. As to expression, expressed in shoot apical meristem, root apical meristem, leaf primordia and the marginal meristem.

The protein localises to the plastid. It localises to the chloroplast. It carries out the reaction DNA(n) + a 2'-deoxyribonucleoside 5'-triphosphate = DNA(n+1) + diphosphate. Its activity is regulated as follows. Inhibited by dideoxythymidine-triphosphate (ddTTP), but not by aphidicolin and N-ethylmaleimide. In terms of biological role, in addition to polymerase activity, this DNA polymerase exhibits 5'-3' exonuclease activity. May be required for DNA replication and accumulation in plastids. The chain is DNA polymerase I A, chloroplastic from Oryza sativa subsp. japonica (Rice).